The primary structure comprises 374 residues: Formylglycine-generating enzyme (374 aa).

Residues 1–33 form the signal peptide; sequence MAAPALGPARGCGAELTLVLLLSLFLLLGWAAG. A disulfide bond links Cys50 and Cys52. The disordered stretch occupies residues 57–102; sequence RPGAQGSSAAAHRYSREANAPGSVPGGRPSPPTKMVPIPAGVFTMG. Ca(2+) is bound at residue Glu130. Asn141 is a glycosylation site (N-linked (GlcNAc...) asparagine). 2 cysteine pairs are disulfide-bonded: Cys218-Cys365 and Cys235-Cys346. The Ca(2+) site is built by Asn259, Ile260, Asp273, Phe275, Asn293, Gly296, Ala298, and Glu300. Cu(2+)-binding residues include Cys336 and Cys341. The interaction with sulfatases stretch occupies residues 341–360; it reads CYRYRCAARSQNTPDSSASN.

This sequence belongs to the sulfatase-modifying factor family. Monomer, homodimer and heterodimer with SUMF2. It depends on Cu(2+) as a cofactor. Post-translationally, N-glycosylated. Contains high-mannose-type oligosaccharides.

Its subcellular location is the endoplasmic reticulum lumen. The catalysed reaction is L-cysteinyl-[sulfatase] + 2 a thiol + O2 = an organic disulfide + 3-oxo-L-alanyl-[sulfatase] + hydrogen sulfide + H2O + H(+). It functions in the pathway protein modification; sulfatase oxidation. Its function is as follows. Oxidase that catalyzes the conversion of cysteine to 3-oxoalanine on target proteins, using molecular oxygen and an unidentified reducing agent. 3-oxoalanine modification, which is also named formylglycine (fGly), occurs in the maturation of arylsulfatases and some alkaline phosphatases that use the hydrated form of 3-oxoalanine as a catalytic nucleophile. Known substrates include GALNS, ARSA, STS and ARSE. The polypeptide is Formylglycine-generating enzyme (Bos taurus (Bovine)).